Reading from the N-terminus, the 147-residue chain is Large ribosomal subunit protein bL9 (147 aa).

This sequence belongs to the bacterial ribosomal protein bL9 family.

Functionally, binds to the 23S rRNA. The polypeptide is Large ribosomal subunit protein bL9 (Myxococcus xanthus (strain DK1622)).